We begin with the raw amino-acid sequence, 313 residues long: Potassium channel subfamily K member 6 (313 aa).

Residues 1–4 (MRRG) lie on the Cytoplasmic side of the membrane. A helical transmembrane segment spans residues 5-25 (ALLASALAAYAGYLALGALLV). Residues N79 and N85 are each glycosylated (N-linked (GlcNAc...) asparagine). The segment at residues 90–115 (AWDFASALFFASTLVTTVGYGYTTPL) is an intramembrane region (pore-forming). 4 residues coordinate K(+): T106, V107, G108, and Y109. Residues 106–111 (TVGYGY) form a selectivity filter 1 region. Residues 121–141 (AFSIVFALLGVPITMLLLTAS) form a helical membrane-spanning segment. Over 142–172 (AQRLSLLLTHAPLSWLSLHWGWPPQRAARWH) the chain is Cytoplasmic. A helical transmembrane segment spans residues 173–193 (LVALLMVIVAIFFLVPAAVFA). An intramembrane region (pore-forming) is located at residues 199–223 (WSFLDAFYFCFISLSTIGLGDYVPG). Residues T214, I215, and G216 each coordinate K(+). A selectivity filter 2 region spans residues 214–219 (TIGLGD). The chain crosses the membrane as a helical span at residues 236–256 (VLVTAYLFLGLVAMVLVLQTF). Residues 257–313 (RRVSDLHGLTELILLPDPDPASLSQDEDDQVAVLDARTDLHQHLSAASHADYASIPR) lie on the Cytoplasmic side of the membrane. Short sequence motifs (lysosomal targeting signal) lie at residues 282 to 290 (DEDDQVAVL) and 308 to 312 (YASIP).

The protein belongs to the two pore domain potassium channel (TC 1.A.1.8) family. In terms of assembly, homodimer; disulfide-linked. N-glycosylation is necessary for targeting to lysosomes.

Its subcellular location is the late endosome membrane. It localises to the lysosome membrane. It carries out the reaction K(+)(in) = K(+)(out). Its function is as follows. K(+) channel that conducts outward rectifying currents at the membranes of the endolysosomal system. Active in lysosomes where it regulates lysosome numbers and size. In macrophages, enables K(+) efflux coupled to ATP-induced NLRP3 inflammasome activation upon bacterial infection. Cooperates with ATP-gated P2RX7 to activate NLRP3 inflammasome, with P2RX7 conducting Ca(2+) and Na(+) influx that sets the membrane potential for K(+) efflux. In Mus musculus (Mouse), this protein is Potassium channel subfamily K member 6.